Here is a 192-residue protein sequence, read N- to C-terminus: Phosphoheptose isomerase (192 aa).

Residues 37–192 form the SIS domain; sequence LADSFKAGGK…IQLIEKEMVK (156 aa). 52–54 is a binding site for substrate; the sequence is NGG. Residues histidine 61 and glutamate 65 each coordinate Zn(2+). Residues glutamate 65, 93 to 94, 119 to 121, serine 124, and glutamine 172 each bind substrate; these read ND and STS. Residues glutamine 172 and histidine 180 each coordinate Zn(2+).

The protein belongs to the SIS family. GmhA subfamily. As to quaternary structure, homotetramer. It depends on Zn(2+) as a cofactor.

It localises to the cytoplasm. It catalyses the reaction 2 D-sedoheptulose 7-phosphate = D-glycero-alpha-D-manno-heptose 7-phosphate + D-glycero-beta-D-manno-heptose 7-phosphate. It participates in carbohydrate biosynthesis; D-glycero-D-manno-heptose 7-phosphate biosynthesis; D-glycero-alpha-D-manno-heptose 7-phosphate and D-glycero-beta-D-manno-heptose 7-phosphate from sedoheptulose 7-phosphate: step 1/1. Catalyzes the isomerization of sedoheptulose 7-phosphate in D-glycero-D-manno-heptose 7-phosphate. In Salmonella agona (strain SL483), this protein is Phosphoheptose isomerase.